Here is a 289-residue protein sequence, read N- to C-terminus: Protein FraH (289 aa).

The DZANK-type zinc-finger motif lies at Cys-4–Gly-49. A zinc finger lies at Cys-18–Cys-48. One can recognise an FHA domain in the interval Val-204–Leu-260.

Putative heterocyst to vegetative cell connection. The chain is Protein FraH (fraH) from Nostoc sp. (strain PCC 7120 / SAG 25.82 / UTEX 2576).